A 500-amino-acid chain; its full sequence is Raftlin-2 (500 aa).

Gly-2 carries the N-myristoyl glycine lipid modification. A lipid anchor (S-palmitoyl cysteine) is attached at Cys-3. The tract at residues 203–236 (GHLSESGVEEEPQHESGQHQTERNSSPSYANPKR) is disordered. Positions 213–224 (EPQHESGQHQTE) are enriched in basic and acidic residues. Residue Ser-404 is modified to Phosphoserine. Residues 406-500 (AQTPERKGSR…EEGVTQVTCM (95 aa)) are disordered. At Thr-408 the chain carries Phosphothreonine. Residues 409–424 (PERKGSRLLKGEDRNK) show a composition bias toward basic and acidic residues. Over residues 426–438 (SSRSLGLDTNASQ) the composition is skewed to polar residues. Residue Ser-429 is modified to Phosphoserine. A compositionally biased stretch (low complexity) spans 467-478 (SDSFSGFSSSDS).

Belongs to the raftlin family. Expressed in B-cells, heart, brain, spleen, large intestine and lung. Expressed in dendritic cells and macrophages.

The protein resides in the cell membrane. Functionally, upon bacterial lipopolysaccharide stimulation, mediates clathrin-dependent internalization of TLR4 in dendritic cells, resulting in activation of TICAM1-mediated signaling and subsequent IFNB1 production. May regulate B-cell antigen receptor-mediated signaling. The sequence is that of Raftlin-2 (Rftn2) from Mus musculus (Mouse).